Consider the following 469-residue polypeptide: ATP-dependent protease ATPase subunit HslU (469 aa).

ATP contacts are provided by residues Ile-21, 63–68, Asp-282, Glu-347, and Arg-419; that span reads GVGKTE.

The protein belongs to the ClpX chaperone family. HslU subfamily. A double ring-shaped homohexamer of HslV is capped on each side by a ring-shaped HslU homohexamer. The assembly of the HslU/HslV complex is dependent on binding of ATP.

It is found in the cytoplasm. ATPase subunit of a proteasome-like degradation complex; this subunit has chaperone activity. The binding of ATP and its subsequent hydrolysis by HslU are essential for unfolding of protein substrates subsequently hydrolyzed by HslV. HslU recognizes the N-terminal part of its protein substrates and unfolds these before they are guided to HslV for hydrolysis. This Petrotoga mobilis (strain DSM 10674 / SJ95) protein is ATP-dependent protease ATPase subunit HslU.